Reading from the N-terminus, the 474-residue chain is Cysteine--tRNA ligase (474 aa).

Cysteine 30 is a Zn(2+) binding site. Positions 32-42 match the 'HIGH' region motif; it reads PTVYNFAHIGN. Positions 212, 237, and 241 each coordinate Zn(2+). The 'KMSKS' region motif lies at 270–274; it reads KMSKS. Lysine 273 contributes to the ATP binding site.

It belongs to the class-I aminoacyl-tRNA synthetase family. Monomer. Requires Zn(2+) as cofactor.

It localises to the cytoplasm. It carries out the reaction tRNA(Cys) + L-cysteine + ATP = L-cysteinyl-tRNA(Cys) + AMP + diphosphate. The sequence is that of Cysteine--tRNA ligase from Leptospira borgpetersenii serovar Hardjo-bovis (strain JB197).